Consider the following 158-residue polypeptide: C-type lectin galactose-binding isoform (158 aa).

The first 23 residues, 1–23 (MGRFLLVTLSLLVMAFFLNGANS), serve as a signal peptide directing secretion. 3 disulfides stabilise this stretch: C26–C37, C54–C154, and C129–C146. The C-type lectin domain maps to 33-155 (RNGFCYKVFN…CTALRPFLCQ (123 aa)). 3 residues coordinate Ca(2+): Q119, D121, and E127. A Galactose-binding motif is present at residues 119-121 (QPD). N134 is a glycosylation site (N-linked (GlcNAc...) asparagine). Residues N142 and D143 each contribute to the Ca(2+) site.

It belongs to the true venom lectin family. In terms of assembly, dimer. Probably disulfide-linked homodimer. As to expression, expressed by the venom gland.

The protein localises to the secreted. In terms of biological role, galactose-binding lectin that binds to and agglutinates erythrocytes in a calcium-dependent manner. The chain is C-type lectin galactose-binding isoform from Pseudechis australis (Mulga snake).